Here is a 273-residue protein sequence, read N- to C-terminus: NAD-dependent protein deacetylase 2 (273 aa).

Residues M1–L273 enclose the Deacetylase sirtuin-type domain. Residues G26–K46 and Q104–D107 each bind NAD(+). H122 (proton acceptor) is an active-site residue. Zn(2+) is bound by residues C130, C133, C181, and C184. NAD(+) contacts are provided by residues G221–S223, N247–G249, and C265.

This sequence belongs to the sirtuin family. Class II subfamily. Zn(2+) is required as a cofactor.

The protein localises to the cytoplasm. It carries out the reaction N(6)-acetyl-L-lysyl-[protein] + NAD(+) + H2O = 2''-O-acetyl-ADP-D-ribose + nicotinamide + L-lysyl-[protein]. NAD-dependent protein deacetylase which modulates the activities of several enzymes which are inactive in their acetylated form. The polypeptide is NAD-dependent protein deacetylase 2 (Bradyrhizobium diazoefficiens (strain JCM 10833 / BCRC 13528 / IAM 13628 / NBRC 14792 / USDA 110)).